The following is a 126-amino-acid chain: Small ribosomal subunit protein eS6 (126 aa).

The protein belongs to the eukaryotic ribosomal protein eS6 family.

The chain is Small ribosomal subunit protein eS6 from Thermococcus sibiricus (strain DSM 12597 / MM 739).